The primary structure comprises 289 residues: Rhodopsin (289 aa).

Residues 1–7 (YLVSPAA) lie on the Extracellular side of the membrane. The helical transmembrane segment at 8–32 (YAALGAYMFLLILIGFPVNFLTLYV) threads the bilayer. Residues 33 to 44 (TLEHKKLRTPLN) lie on the Cytoplasmic side of the membrane. Residues 45 to 67 (YILLNLAVADLFMVLGGFTTTMY) form a helical membrane-spanning segment. Residues 68–81 (TSMHGYFVLGRLGC) lie on the Extracellular side of the membrane. A disulfide bridge connects residues cysteine 81 and cysteine 158. The chain crosses the membrane as a helical span at residues 82 to 104 (NLEGFFATLGGEIALWSLVVLAI). The 'Ionic lock' involved in activated form stabilization motif lies at 105 to 107 (ERW). Topologically, residues 105-123 (ERWIVVCKPISNFRFTEDN) are cytoplasmic. The chain crosses the membrane as a helical span at residues 124 to 144 (AIMGLAFSWVMALTCAVPPLV). At 145–173 (GWSRYIPEGMQCSCGVDYYTRAEGFNNES) the chain is on the extracellular side. Asparagine 171 carries an N-linked (GlcNAc...) asparagine glycan. Residues 174 to 195 (FVIYMFIVHFPIPLSVIFFCYG) traverse the membrane as a helical segment. The Cytoplasmic segment spans residues 196 to 223 (RLLCAVKEAAAAQQESETTQRAEKEVSR). Residues 224–245 (MVVILVIGFLVCWLPYASVAWW) traverse the membrane as a helical segment. Residues 246 to 257 (IFCNQGSDFGPI) are Extracellular-facing. A helical membrane pass occupies residues 258 to 279 (FMTLPSFFAKRPAIYNPMIYIC). N6-(retinylidene)lysine is present on lysine 267. Residues 280 to 289 (MNKQFRHCMI) are Cytoplasmic-facing.

It belongs to the G-protein coupled receptor 1 family. Opsin subfamily. Post-translationally, phosphorylated on some or all of the serine and threonine residues present in the C-terminal region. Contains one covalently linked retinal chromophore.

The protein resides in the membrane. It is found in the cell projection. The protein localises to the cilium. It localises to the photoreceptor outer segment. Its function is as follows. Photoreceptor required for image-forming vision at low light intensity. While most salt water fish species use retinal as chromophore, most freshwater fish use 3-dehydroretinal, or a mixture of retinal and 3-dehydroretinal. Light-induced isomerization of 11-cis to all-trans retinal triggers a conformational change that activates signaling via G-proteins. Subsequent receptor phosphorylation mediates displacement of the bound G-protein alpha subunit by arrestin and terminates signaling. In Batrachocottus multiradiatus (Baikal sculpin), this protein is Rhodopsin (rho).